Consider the following 417-residue polypeptide: Probable serine incorporator (417 aa).

10 helical membrane passes run 25–45 (VYVV…YWTF), 69–89 (VVYR…LVMI), 104–124 (GYWP…FFIP), 131–151 (YTWI…VLLI), 180–200 (CVLS…MLVF), 208–228 (INQF…VLSI), 239–259 (SGLF…YSAI), 276–296 (KEST…YSAF), 339–359 (FFHF…TNWA), and 391–411 (VVSS…PILL).

This sequence belongs to the TDE1 family.

The protein resides in the endoplasmic reticulum membrane. In terms of biological role, enhances the incorporation of serine into phosphatidylserine and sphingolipids. The sequence is that of Probable serine incorporator (serinc) from Dictyostelium discoideum (Social amoeba).